Consider the following 196-residue polypeptide: Chromophore lyase CpcT/CpeT (196 aa).

This sequence belongs to the CpcT/CpeT biliprotein lyase family.

In terms of biological role, covalently attaches a chromophore to Cys residue(s) of phycobiliproteins. This chain is Chromophore lyase CpcT/CpeT, found in Thermosynechococcus vestitus (strain NIES-2133 / IAM M-273 / BP-1).